The chain runs to 152 residues: Small ribosomal subunit protein uS19z (152 aa).

The protein belongs to the universal ribosomal protein uS19 family.

It is found in the cytoplasm. This chain is Small ribosomal subunit protein uS19z (RPS15B), found in Arabidopsis thaliana (Mouse-ear cress).